The primary structure comprises 116 residues: Calcium-regulated OB-fold protein CarO (116 aa).

A signal peptide spans 1–21 (MKLRHLPLIAAIGLFSTVTLA).

The protein localises to the periplasm. Its function is as follows. Plays a role in intracellular Ca(2+) homeostasis. Involved in cell protection against oxidative stress in strain 25W. This is Calcium-regulated OB-fold protein CarO from Pseudomonas aeruginosa (strain ATCC 15692 / DSM 22644 / CIP 104116 / JCM 14847 / LMG 12228 / 1C / PRS 101 / PAO1).